A 143-amino-acid polypeptide reads, in one-letter code: Nucleoside diphosphate kinase (143 aa).

Residues lysine 11, phenylalanine 59, arginine 87, threonine 93, arginine 104, and asparagine 114 each coordinate ATP. The active-site Pros-phosphohistidine intermediate is the histidine 117.

Belongs to the NDK family. As to quaternary structure, homotetramer. Mg(2+) serves as cofactor.

The protein resides in the cytoplasm. It catalyses the reaction a 2'-deoxyribonucleoside 5'-diphosphate + ATP = a 2'-deoxyribonucleoside 5'-triphosphate + ADP. It carries out the reaction a ribonucleoside 5'-diphosphate + ATP = a ribonucleoside 5'-triphosphate + ADP. Major role in the synthesis of nucleoside triphosphates other than ATP. The ATP gamma phosphate is transferred to the NDP beta phosphate via a ping-pong mechanism, using a phosphorylated active-site intermediate. This Shewanella sp. (strain W3-18-1) protein is Nucleoside diphosphate kinase.